The chain runs to 439 residues: Trigger factor (439 aa).

The 86-residue stretch at 175–260 (SDKLVIDYQN…VKSVYVMKGM (86 aa)) folds into the PPIase FKBP-type domain.

This sequence belongs to the FKBP-type PPIase family. Tig subfamily.

The protein localises to the cytoplasm. The enzyme catalyses [protein]-peptidylproline (omega=180) = [protein]-peptidylproline (omega=0). Involved in protein export. Acts as a chaperone by maintaining the newly synthesized protein in an open conformation. Functions as a peptidyl-prolyl cis-trans isomerase. This is Trigger factor from Ehrlichia chaffeensis (strain ATCC CRL-10679 / Arkansas).